Reading from the N-terminus, the 203-residue chain is Proteasome subunit beta 2 (203 aa).

Positions 1-9 (MGEEVQIGA) are cleaved as a propeptide — removed in mature form; by autocatalysis. Residue Thr-10 is the Nucleophile of the active site.

It belongs to the peptidase T1B family. The 20S proteasome core is composed of 14 alpha and 14 beta subunits that assemble into four stacked heptameric rings, resulting in a barrel-shaped structure. The two inner rings, each composed of seven catalytic beta subunits, are sandwiched by two outer rings, each composed of seven alpha subunits. The catalytic chamber with the active sites is on the inside of the barrel. Has a gated structure, the ends of the cylinder being occluded by the N-termini of the alpha-subunits. Is capped at one or both ends by the proteasome regulatory ATPase, PAN.

Its subcellular location is the cytoplasm. The enzyme catalyses Cleavage of peptide bonds with very broad specificity.. With respect to regulation, the formation of the proteasomal ATPase PAN-20S proteasome complex, via the docking of the C-termini of PAN into the intersubunit pockets in the alpha-rings, triggers opening of the gate for substrate entry. Interconversion between the open-gate and close-gate conformations leads to a dynamic regulation of the 20S proteasome proteolysis activity. Functionally, component of the proteasome core, a large protease complex with broad specificity involved in protein degradation. The polypeptide is Proteasome subunit beta 2 (Pyrobaculum arsenaticum (strain DSM 13514 / JCM 11321 / PZ6)).